A 406-amino-acid polypeptide reads, in one-letter code: Peptidase T (406 aa).

H82 serves as a coordination point for Zn(2+). D84 is an active-site residue. D142 is a Zn(2+) binding site. The Proton acceptor role is filled by E176. Zn(2+)-binding residues include E177, D199, and H381.

The protein belongs to the peptidase M20B family. Requires Zn(2+) as cofactor.

The protein localises to the cytoplasm. The catalysed reaction is Release of the N-terminal residue from a tripeptide.. In terms of biological role, cleaves the N-terminal amino acid of tripeptides. This is Peptidase T from Streptococcus agalactiae serotype III (strain NEM316).